We begin with the raw amino-acid sequence, 213 residues long: Orotate phosphoribosyltransferase (213 aa).

Residue Lys26 participates in 5-phospho-alpha-D-ribose 1-diphosphate binding. 34–35 is an orotate binding site; it reads FF. 5-phospho-alpha-D-ribose 1-diphosphate contacts are provided by residues 72-73, Arg99, Lys100, Lys103, His105, and 124-132; these read YK and DDVITAGTA. Orotate contacts are provided by Thr128 and Arg156.

Belongs to the purine/pyrimidine phosphoribosyltransferase family. PyrE subfamily. As to quaternary structure, homodimer. Mg(2+) serves as cofactor.

It carries out the reaction orotidine 5'-phosphate + diphosphate = orotate + 5-phospho-alpha-D-ribose 1-diphosphate. It functions in the pathway pyrimidine metabolism; UMP biosynthesis via de novo pathway; UMP from orotate: step 1/2. In terms of biological role, catalyzes the transfer of a ribosyl phosphate group from 5-phosphoribose 1-diphosphate to orotate, leading to the formation of orotidine monophosphate (OMP). This chain is Orotate phosphoribosyltransferase, found in Pseudomonas putida (strain W619).